We begin with the raw amino-acid sequence, 755 residues long: von Willebrand factor A domain-containing protein 2 (755 aa).

A signal peptide spans 1–23 (MPPFLLLEAVCVFLFSRVPPSLP). Residues 51–222 (DIMFLLDGSN…DATNGLFSTL (172 aa)) enclose the VWFA 1 domain. N-linked (GlcNAc...) asparagine glycosylation is present at asparagine 147. Residues 296-333 (PGPCDSQPCQNGGTCVPEGLDGYQCLCPLAFGGEANCA) form the EGF-like 1 domain. 3 disulfide bridges follow: cysteine 299–cysteine 310, cysteine 304–cysteine 320, and cysteine 322–cysteine 332. VWFA domains are found at residues 343–517 (DLLF…QGKL) and 531–705 (DLVF…IEWL). The EGF-like 2 domain maps to 712-748 (PVNLCKPSPCMNEGSCVLQNGSYRCKCRDGWEGPHCE). Disulfide bonds link cysteine 716-cysteine 727, cysteine 721-cysteine 736, and cysteine 738-cysteine 747.

As to quaternary structure, forms monomers and multimers. In terms of processing, a 55 kDa form is produced by proteolytic cleavage. Expression is generally absent in normal colon and other normal body tissues, but it is induced an average of 78-fold in Stage II, III, and IV colon cancers, as well as in colon adenomas and colon cancer cell lines.

It localises to the secreted. This chain is von Willebrand factor A domain-containing protein 2 (VWA2), found in Homo sapiens (Human).